The primary structure comprises 397 residues: Neuroplastin (397 aa).

The first 28 residues, Met1–Ala28, serve as a signal peptide directing secretion. 3 consecutive Ig-like domains span residues Gln29–Thr134, Pro148–Lys234, and Pro237–Ser327. The Extracellular portion of the chain corresponds to Gln29 to Pro338. An intrachain disulfide couples Cys52 to Cys116. Residues Arg149 to Ser161 are narpin; mediates binding with FGFR1 and has antidepressant-like activity. Cys169 and Cys217 are oxidised to a cystine. Asn170, Asn196, Asn228, Asn283, Asn295, and Asn316 each carry an N-linked (GlcNAc...) asparagine glycan. A disulfide bridge connects residues Cys258 and Cys315. The chain crosses the membrane as a helical span at residues Leu339–Tyr359. The Cytoplasmic portion of the chain corresponds to Glu360–Asn397. Residues Arg364–Asn397 form a disordered region.

In terms of assembly, interacts with ATP2B1; this interaction stabilizes ATP2B1 and increases ATPase activity; this interaction controls T cell calcium homeostasis following T cell activation. Interacts with XKR8; promoting its localization at the cell membrane. Post-translationally, N-glycosylated. As to expression, isoform 1 and isoform 2 are widely expressed with variable levels in brain. Isoform 1 is expressed in cerebellum and midbrain. Isoform 1 and isoform 2 are expressed in cerebral cortex, hippocampus and striatum. Isoform 2 is more abundant in the cerebral cortex than isoform 1.

It is found in the cell membrane. The protein resides in the postsynaptic density. Its function is as follows. Probable homophilic and heterophilic cell adhesion molecule involved in long term potentiation at hippocampal excitatory synapses through activation of p38MAPK. May also regulate neurite outgrowth by activating the FGFR1 signaling pathway. May play a role in synaptic plasticity. Also acts as a chaperone for ATP2B1; stabilizes ATP2B1 and increases its ATPase activity. Promotes localization of XKR8 at the cell membrane. This chain is Neuroplastin (Nptn), found in Mus musculus (Mouse).